The following is a 95-amino-acid chain: Ribonuclease kappa-B (95 aa).

Transmembrane regions (helical) follow at residues 12-32 (GLII…FFYI) and 68-88 (CWIA…QFYV).

Belongs to the RNase K family.

The protein localises to the membrane. With respect to regulation, inhibited by Zn(2+) and Hg(2+), while it is unaffected by Ca(2+). In terms of biological role, endoribonuclease which displays activity against poly(C) and poly(U) synthetic substrates, as well as rRNA. The chain is Ribonuclease kappa-B from Ceratitis capitata (Mediterranean fruit fly).